A 24-amino-acid chain; its full sequence is Brevinin-1 (24 aa).

Cysteines 18 and 24 form a disulfide.

This sequence belongs to the frog skin active peptide (FSAP) family. Brevinin subfamily. As to expression, expressed by the skin glands.

Its subcellular location is the secreted. Shows antibacterial activity against representative Gram-negative and Gram-positive bacterial species, and a very high hemolytic activity. The sequence is that of Brevinin-1 from Pelophylax porosus brevipodus (Nagoya Daruma pond frog).